The sequence spans 298 residues: Golgi to ER traffic protein 2 (298 aa).

Residues 1-164 (MSEPVVDTAE…LEYNTYNQKL (164 aa)) lie on the Cytoplasmic side of the membrane. The segment at 40 to 92 (ILSQGSSVKTSGVKSVLDQEKEATPSHDEDPEIQDITEITTPPPRTPPIGEDA) is disordered. The span at 42 to 55 (SQGSSVKTSGVKSV) shows a compositional bias: low complexity. Residues 56–67 (LDQEKEATPSHD) are compositionally biased toward basic and acidic residues. The helical transmembrane segment at 165-185 (WKFRFLLVRVSVTLFNFFYHY) threads the bilayer. At 186–211 (INLSNFHASNYAYVRDLSSEKYPVRD) the chain is on the lumenal side. Residues 212-231 (FFTWFATTEVVLVAAYYSIF) traverse the membrane as a helical segment. Over 232–275 (HSLGLFHAANQNSFVLKAMSMGSMVLPQLEHYKPLVARFLGYYE) the chain is Cytoplasmic. Residues 276-296 (LLGIVLGDLSLVIVLFGLLSF) traverse the membrane as a helical segment. The Lumenal portion of the chain corresponds to 297–298 (AN).

Belongs to the GET2 family. As to quaternary structure, component of the Golgi to ER traffic (GET) complex, which is composed of GET1, GET2 and GET3. Within the complex, GET1 and GET2 form a heterotetramer which is stabilized by phosphatidylinositol binding and which binds to the GET3 homodimer.

Its subcellular location is the endoplasmic reticulum membrane. It is found in the golgi apparatus membrane. Required for the post-translational delivery of tail-anchored (TA) proteins to the endoplasmic reticulum. Together with GET1, acts as a membrane receptor for soluble GET3, which recognizes and selectively binds the transmembrane domain of TA proteins in the cytosol. The GET complex cooperates with the HDEL receptor ERD2 to mediate the ATP-dependent retrieval of resident ER proteins that contain a C-terminal H-D-E-L retention signal from the Golgi to the ER. The sequence is that of Golgi to ER traffic protein 2 from Candida albicans (strain SC5314 / ATCC MYA-2876) (Yeast).